A 290-amino-acid polypeptide reads, in one-letter code: Isopentenyl-diphosphate Delta-isomerase II (290 aa).

The Nudix hydrolase domain occupies Met-108–Leu-260. Active-site residues include Cys-145 and Glu-207.

This sequence belongs to the IPP isomerase type 1 family.

The catalysed reaction is isopentenyl diphosphate = dimethylallyl diphosphate. It functions in the pathway isoprenoid biosynthesis; dimethylallyl diphosphate biosynthesis; dimethylallyl diphosphate from isopentenyl diphosphate: step 1/1. It participates in porphyrin-containing compound metabolism; chlorophyll biosynthesis. Its function is as follows. Catalyzes the 1,3-allylic rearrangement of the homoallylic substrate isopentenyl (IPP) to its highly electrophilic allylic isomer, dimethylallyl diphosphate (DMAPP). This Clarkia xantiana (Gunsight clarkia) protein is Isopentenyl-diphosphate Delta-isomerase II (IPI2).